We begin with the raw amino-acid sequence, 72 residues long: Disintegrin basilicin (72 aa).

The region spanning 1–72 (AGEECDCGSP…ADCPRNHFHA (72 aa)) is the Disintegrin domain. Cystine bridges form between cysteine 5/cysteine 20, cysteine 7/cysteine 15, cysteine 14/cysteine 37, cysteine 28/cysteine 34, cysteine 33/cysteine 58, and cysteine 46/cysteine 65. The Cell attachment site motif lies at 50–52 (RGD).

It belongs to the venom metalloproteinase (M12B) family. P-II subfamily. P-IIa sub-subfamily. Monomer (disintegrin). As to expression, expressed by the venom gland.

Its subcellular location is the secreted. Its function is as follows. Inhibits fibrinogen interaction with platelets. Acts by binding to alpha-IIb/beta-3 (ITGA2B/ITGB3) on the platelet surface and inhibits aggregation induced by ADP, thrombin, platelet-activating factor and collagen. The protein is Disintegrin basilicin of Crotalus basiliscus (Mexican west-coast rattlesnake).